A 209-amino-acid chain; its full sequence is ATP-dependent Clp protease proteolytic subunit (209 aa).

The Nucleophile role is filled by serine 106. Residue histidine 131 is part of the active site.

This sequence belongs to the peptidase S14 family. Fourteen ClpP subunits assemble into 2 heptameric rings which stack back to back to give a disk-like structure with a central cavity, resembling the structure of eukaryotic proteasomes.

The protein localises to the cytoplasm. It carries out the reaction Hydrolysis of proteins to small peptides in the presence of ATP and magnesium. alpha-casein is the usual test substrate. In the absence of ATP, only oligopeptides shorter than five residues are hydrolyzed (such as succinyl-Leu-Tyr-|-NHMec, and Leu-Tyr-Leu-|-Tyr-Trp, in which cleavage of the -Tyr-|-Leu- and -Tyr-|-Trp bonds also occurs).. In terms of biological role, cleaves peptides in various proteins in a process that requires ATP hydrolysis. Has a chymotrypsin-like activity. Plays a major role in the degradation of misfolded proteins. The chain is ATP-dependent Clp protease proteolytic subunit from Brucella suis biovar 1 (strain 1330).